Here is a 333-residue protein sequence, read N- to C-terminus: Na(+)-translocating ferredoxin:NAD(+) oxidoreductase complex subunit B (333 aa).

Residues 1 to 27 (MLNAILVPVGILGVFGLIFGIGLAIAA) are hydrophobic. The region spanning 33–92 (YEDPRVPLVRAALPGANCGGCGLPGCDALAANIVGGSAAIDACPVGGASCAAAVAEIMGM) is the 4Fe-4S domain. Positions 50, 53, 58, 75, 138, 142, 148, 152, 172, 175, 178, 182, 217, 220, 223, 227, 246, 249, 252, 256, 279, 282, 285, 289, 310, 313, 316, and 320 each coordinate [4Fe-4S] cluster. 4Fe-4S ferredoxin-type domains lie at 126–162 (REAM…IGED), 163–192 (GLPK…LVPE), 207–237 (KIAR…VENN), 239–266 (AKID…GDVE), 270–299 (STAY…GEIK), and 301–330 (PPYV…MRPN).

This sequence belongs to the 4Fe4S bacterial-type ferredoxin family. RnfB subfamily. In terms of assembly, the complex is composed of six subunits: RnfA, RnfB, RnfC, RnfD, RnfE and RnfG. [4Fe-4S] cluster serves as cofactor.

The protein resides in the cell membrane. The catalysed reaction is 2 reduced [2Fe-2S]-[ferredoxin] + Na(+)(in) + NAD(+) + H(+) = 2 oxidized [2Fe-2S]-[ferredoxin] + Na(+)(out) + NADH. Its function is as follows. Part of a membrane-bound complex that couples electron transfer with translocation of ions across the membrane. Couples electron transfer from reduced ferredoxin to NAD(+) with electrogenic movement of Na(+) out of the cell. Involved in caffeate respiration. The polypeptide is Na(+)-translocating ferredoxin:NAD(+) oxidoreductase complex subunit B (Acetobacterium woodii (strain ATCC 29683 / DSM 1030 / JCM 2381 / KCTC 1655 / WB1)).